Here is a 490-residue protein sequence, read N- to C-terminus: B3 domain-containing protein LOC_Os12g40080 (490 aa).

The TF-B3 1 DNA-binding region spans 24-117; the sequence is GKSFIKVMIT…HFKVWIYDPS (94 aa). Residues 161-191 form a disordered region; sequence SGHSKETSEINPANSPSWKPTERVPSSEELD. Over residues 169-178 the composition is skewed to polar residues; that stretch reads EINPANSPSW. 2 consecutive DNA-binding regions (TF-B3) follow at residues 236–331 and 389–487; these read FYIT…FHPL and VAVM…IRKS.

It is found in the nucleus. This is B3 domain-containing protein LOC_Os12g40080 from Oryza sativa subsp. japonica (Rice).